A 342-amino-acid chain; its full sequence is Subtilisin-like serine protease Rho m 2.0101 (342 aa).

Residues 1–30 constitute a propeptide, removed in mature form; it reads TMELLEDLIEQVRQLPMVNFIEKNSLVHAN. In terms of domain architecture, Inhibitor I9 spans 1–30; the sequence is TMELLEDLIEQVRQLPMVNFIEKNSLVHAN. One can recognise a Peptidase S8 domain in the interval 39–342; that stretch reads PWGLARISHR…GQNLTKFWGH (304 aa). Active-site charge relay system residues include Asp-75 and His-107. N-linked (GlcNAc...) asparagine glycosylation is found at Asn-137 and Asn-171. Ser-267 serves as the catalytic Charge relay system. Residue Asn-335 is glycosylated (N-linked (GlcNAc...) asparagine).

This sequence belongs to the peptidase S8 family.

Functionally, serine protease. This chain is Subtilisin-like serine protease Rho m 2.0101, found in Rhodotorula mucilaginosa (Yeast).